The primary structure comprises 309 residues: MHTGQIIQLLAGFYDVLTEDHKIVRTRARGNFRNQKTSPLVGDMVDFKESENDTGYITKIHTRENELVRPPLANIDQAVIVTAATEPSFSANLLDRQLVALAEKHIEAILYFSKTDLLSPTEFQDLQKIAGYYQKIGYQVIFPISSQPDADLIELKESFKNQLTIFMGQTGAGKSTLLNRIDSKLNIATGEVSQALNRGKHTTRKVSLIPIEDGLVADTPGFSTYAVFEMADTQLKEYFIDFKKLSQNCRFRECLHLNEPGCAVKAAVEDGSVLSSRYANYEQFIELIRNQKPEYKRKGYQKKDRRKKK.

The region spanning glutamate 64–tyrosine 225 is the CP-type G domain. Residues serine 113–aspartate 116 and glycine 168–threonine 176 each bind GTP. 4 residues coordinate Zn(2+): cysteine 249, cysteine 254, histidine 256, and cysteine 262.

This sequence belongs to the TRAFAC class YlqF/YawG GTPase family. RsgA subfamily. Monomer. Associates with 30S ribosomal subunit, binds 16S rRNA. It depends on Zn(2+) as a cofactor.

The protein localises to the cytoplasm. Its function is as follows. One of several proteins that assist in the late maturation steps of the functional core of the 30S ribosomal subunit. Helps release RbfA from mature subunits. May play a role in the assembly of ribosomal proteins into the subunit. Circularly permuted GTPase that catalyzes slow GTP hydrolysis, GTPase activity is stimulated by the 30S ribosomal subunit. The chain is Small ribosomal subunit biogenesis GTPase RsgA from Pediococcus pentosaceus (strain ATCC 25745 / CCUG 21536 / LMG 10740 / 183-1w).